Consider the following 253-residue polypeptide: Ubiquinone biosynthesis O-methyltransferase (253 aa).

S-adenosyl-L-methionine is bound by residues arginine 47, glycine 78, aspartate 99, and methionine 141.

This sequence belongs to the methyltransferase superfamily. UbiG/COQ3 family.

The catalysed reaction is a 3-demethylubiquinol + S-adenosyl-L-methionine = a ubiquinol + S-adenosyl-L-homocysteine + H(+). The enzyme catalyses a 3-(all-trans-polyprenyl)benzene-1,2-diol + S-adenosyl-L-methionine = a 2-methoxy-6-(all-trans-polyprenyl)phenol + S-adenosyl-L-homocysteine + H(+). Its pathway is cofactor biosynthesis; ubiquinone biosynthesis. O-methyltransferase that catalyzes the 2 O-methylation steps in the ubiquinone biosynthetic pathway. The chain is Ubiquinone biosynthesis O-methyltransferase from Bradyrhizobium sp. (strain ORS 278).